Consider the following 496-residue polypeptide: Autophagy-related protein 21 (496 aa).

Residues S41–A86 form a disordered region. The segment covering S46 to S57 has biased composition (low complexity). Positions D75 to D84 are enriched in acidic residues. A Phosphothreonine modification is found at T213. S237 is subject to Phosphoserine. WD repeat units follow at residues V294 to S334, T346 to P385, and V448 to V488. The short motif at F342–T346 is the L/FRRG motif element.

Belongs to the WD repeat PROPPIN family.

Its subcellular location is the cytoplasm. The protein localises to the vacuole. Functionally, required for cytoplasm to vacuole transport (Cvt) vesicles formation and mitophagy. Involved in binding of phosphatidylethanolamine to ATG8 and in recruitment of ATG8 and ATG5 to the pre-autophagosomal structure. Protects ATG8 from ARG4-mediated cleavage. Essential for maturation of proaminopeptidase I. The protein is Autophagy-related protein 21 (ATG21) of Saccharomyces cerevisiae (strain ATCC 204508 / S288c) (Baker's yeast).